A 230-amino-acid polypeptide reads, in one-letter code: Fibrillarin-like rRNA/tRNA 2'-O-methyltransferase (230 aa).

S-adenosyl-L-methionine is bound by residues 87–88 (TT), 105–106 (EF), 130–131 (DA), and 150–153 (DVAQ).

This sequence belongs to the methyltransferase superfamily. Fibrillarin family. Interacts with nop5. Component of box C/D small ribonucleoprotein (sRNP) particles that contain rpl7ae, FlpA and nop5, plus a guide RNA.

In terms of biological role, involved in pre-rRNA and tRNA processing. Utilizes the methyl donor S-adenosyl-L-methionine to catalyze the site-specific 2'-hydroxyl methylation of ribose moieties in rRNA and tRNA. Site specificity is provided by a guide RNA that base pairs with the substrate. Methylation occurs at a characteristic distance from the sequence involved in base pairing with the guide RNA. This chain is Fibrillarin-like rRNA/tRNA 2'-O-methyltransferase, found in Methanococcus vannielii (strain ATCC 35089 / DSM 1224 / JCM 13029 / OCM 148 / SB).